Consider the following 664-residue polypeptide: DNA ligase (664 aa).

NAD(+) contacts are provided by residues 34-38 (DAEYD), 83-84 (SL), and Glu114. Lys116 functions as the N6-AMP-lysine intermediate in the catalytic mechanism. The NAD(+) site is built by Arg137, Glu172, Lys288, and Lys312. Cys406, Cys409, Cys424, and Cys429 together coordinate Zn(2+). Residues 586-664 (VRDNRLEGLT…EEEFRQMVMS (79 aa)) enclose the BRCT domain.

This sequence belongs to the NAD-dependent DNA ligase family. LigA subfamily. It depends on Mg(2+) as a cofactor. The cofactor is Mn(2+).

It catalyses the reaction NAD(+) + (deoxyribonucleotide)n-3'-hydroxyl + 5'-phospho-(deoxyribonucleotide)m = (deoxyribonucleotide)n+m + AMP + beta-nicotinamide D-nucleotide.. Functionally, DNA ligase that catalyzes the formation of phosphodiester linkages between 5'-phosphoryl and 3'-hydroxyl groups in double-stranded DNA using NAD as a coenzyme and as the energy source for the reaction. It is essential for DNA replication and repair of damaged DNA. The protein is DNA ligase of Carboxydothermus hydrogenoformans (strain ATCC BAA-161 / DSM 6008 / Z-2901).